The primary structure comprises 348 residues: Histidinol-phosphate aminotransferase (348 aa).

Residue K207 is modified to N6-(pyridoxal phosphate)lysine.

It belongs to the class-II pyridoxal-phosphate-dependent aminotransferase family. Histidinol-phosphate aminotransferase subfamily. As to quaternary structure, homodimer. Pyridoxal 5'-phosphate is required as a cofactor.

It carries out the reaction L-histidinol phosphate + 2-oxoglutarate = 3-(imidazol-4-yl)-2-oxopropyl phosphate + L-glutamate. Its pathway is amino-acid biosynthesis; L-histidine biosynthesis; L-histidine from 5-phospho-alpha-D-ribose 1-diphosphate: step 7/9. This chain is Histidinol-phosphate aminotransferase, found in Crocosphaera subtropica (strain ATCC 51142 / BH68) (Cyanothece sp. (strain ATCC 51142)).